We begin with the raw amino-acid sequence, 431 residues long: Glutamate-1-semialdehyde 2,1-aminomutase (431 aa).

Lys265 carries the post-translational modification N6-(pyridoxal phosphate)lysine.

Belongs to the class-III pyridoxal-phosphate-dependent aminotransferase family. HemL subfamily. In terms of assembly, homodimer. It depends on pyridoxal 5'-phosphate as a cofactor.

The protein resides in the cytoplasm. It carries out the reaction (S)-4-amino-5-oxopentanoate = 5-aminolevulinate. Its pathway is porphyrin-containing compound metabolism; protoporphyrin-IX biosynthesis; 5-aminolevulinate from L-glutamyl-tRNA(Glu): step 2/2. This chain is Glutamate-1-semialdehyde 2,1-aminomutase, found in Vibrio atlanticus (strain LGP32) (Vibrio splendidus (strain Mel32)).